A 31-amino-acid polypeptide reads, in one-letter code: Cyclotide mden-M (31 aa).

The segment at residues 1–31 (GTIPCGESCVYIPCITSALGCSCKKKVCYKN) is a cross-link (cyclopeptide (Gly-Asn)). 3 disulfide bridges follow: cysteine 5–cysteine 21, cysteine 9–cysteine 23, and cysteine 14–cysteine 28.

Belongs to the cyclotide family. Bracelet subfamily. Post-translationally, this is a cyclic peptide.

Probably participates in a plant defense mechanism. The sequence is that of Cyclotide mden-M from Melicytus dentatus (Tree violet).